A 303-amino-acid chain; its full sequence is Pyridoxal 5'-phosphate synthase subunit PdxS (303 aa).

Residue D33 participates in D-ribose 5-phosphate binding. The active-site Schiff-base intermediate with D-ribose 5-phosphate is K90. D-ribose 5-phosphate is bound at residue G162. R174 lines the D-glyceraldehyde 3-phosphate pocket. Residues G223 and 244–245 (GS) contribute to the D-ribose 5-phosphate site.

This sequence belongs to the PdxS/SNZ family. In the presence of PdxT, forms a dodecamer of heterodimers.

It carries out the reaction aldehydo-D-ribose 5-phosphate + D-glyceraldehyde 3-phosphate + L-glutamine = pyridoxal 5'-phosphate + L-glutamate + phosphate + 3 H2O + H(+). Its pathway is cofactor biosynthesis; pyridoxal 5'-phosphate biosynthesis. In terms of biological role, catalyzes the formation of pyridoxal 5'-phosphate from ribose 5-phosphate (RBP), glyceraldehyde 3-phosphate (G3P) and ammonia. The ammonia is provided by the PdxT subunit. Can also use ribulose 5-phosphate and dihydroxyacetone phosphate as substrates, resulting from enzyme-catalyzed isomerization of RBP and G3P, respectively. This Streptomyces coelicolor (strain ATCC BAA-471 / A3(2) / M145) protein is Pyridoxal 5'-phosphate synthase subunit PdxS.